The sequence spans 489 residues: Bypass of stop codon protein 5 (489 aa).

Residues 1-42 form a disordered region; that stretch reads MQESKEPQNKFEGCQRISSSSSTLFGGTSFEEPRCGTSQGKE. The segment covering 18–30 has biased composition (low complexity); sequence SSSSSTLFGGTSF. Residues Ser-111 and Ser-350 each carry the phosphoserine modification.

It belongs to the BUL1 family.

Appears to play a role in translation fidelity, and may act when translation is compromised. May be a component of the ubiquitination pathway. The polypeptide is Bypass of stop codon protein 5 (BSC5) (Saccharomyces cerevisiae (strain ATCC 204508 / S288c) (Baker's yeast)).